Here is a 309-residue protein sequence, read N- to C-terminus: Ferrochelatase (309 aa).

The Fe cation site is built by His-185 and Glu-262.

This sequence belongs to the ferrochelatase family.

It is found in the cytoplasm. It catalyses the reaction heme b + 2 H(+) = protoporphyrin IX + Fe(2+). The protein operates within porphyrin-containing compound metabolism; protoheme biosynthesis; protoheme from protoporphyrin-IX: step 1/1. In terms of biological role, catalyzes the ferrous insertion into protoporphyrin IX. The sequence is that of Ferrochelatase from Campylobacter jejuni subsp. jejuni serotype O:6 (strain 81116 / NCTC 11828).